Reading from the N-terminus, the 524-residue chain is Beta-glucosidase 22 (524 aa).

Residues 1-24 form the signal peptide; sequence MALQKFPLLGLLFLITIVVSSTIA. Q55 provides a ligand contact to a beta-D-glucoside. N61 carries N-linked (GlcNAc...) asparagine glycosylation. A beta-D-glucoside contacts are provided by residues H158 and 203–204; that span reads NE. Residue E204 is the Proton donor of the active site. C223 and C230 are disulfide-bonded. A beta-D-glucoside is bound by residues Y346, E418, W468, 475 to 476, and F484; that span reads EW. E418 functions as the Nucleophile in the catalytic mechanism. N-linked (GlcNAc...) asparagine glycosylation occurs at N494. A Prevents secretion from ER motif is present at residues 521-524; it reads KDEL.

The protein belongs to the glycosyl hydrolase 1 family. Component of the PYK10 complex, at least composed of PYK10/BGLU23, BGLU21, BGLU22, JAL22, JAL23, PBP1/JAL30, PBP2/JAL31, JAL32, JAL33, JAL34, JAL35, GLL22 and GLL23. In terms of tissue distribution, expressed exclusively in roots.

It localises to the endoplasmic reticulum lumen. It catalyses the reaction Hydrolysis of terminal, non-reducing beta-D-glucosyl residues with release of beta-D-glucose.. With respect to regulation, activated upon binding to PBP1 or PBP2. Beta-D-glucosidase active on scopolin &gt;&gt; esculin &gt;&gt; 4-MU-glucoside. No activity with DIMBOA-glucoside, pNP-glucoside, oNP-glucoside and sinigrin as substrates. The polypeptide is Beta-glucosidase 22 (Arabidopsis thaliana (Mouse-ear cress)).